A 291-amino-acid chain; its full sequence is Ribonuclease Z (291 aa).

7 residues coordinate Zn(2+): H60, H62, D64, H65, H132, D200, and H256. The active-site Proton acceptor is the D64.

It belongs to the RNase Z family. As to quaternary structure, homodimer. It depends on Zn(2+) as a cofactor.

It carries out the reaction Endonucleolytic cleavage of RNA, removing extra 3' nucleotides from tRNA precursor, generating 3' termini of tRNAs. A 3'-hydroxy group is left at the tRNA terminus and a 5'-phosphoryl group is left at the trailer molecule.. Its function is as follows. Zinc phosphodiesterase, which displays some tRNA 3'-processing endonuclease activity. Probably involved in tRNA maturation, by removing a 3'-trailer from precursor tRNA. This chain is Ribonuclease Z, found in Metallosphaera sedula (strain ATCC 51363 / DSM 5348 / JCM 9185 / NBRC 15509 / TH2).